The primary structure comprises 953 residues: Zinc finger protein 507 (953 aa).

Serine 95 bears the Phosphoserine mark. 3 consecutive C2H2-type zinc fingers follow at residues 125–147, 155–185, and 248–270; these read YQCS…IKQH, LMCS…ANIH, and YRCL…AWKH. Residue serine 427 is modified to Phosphoserine. Residues 470–489 form a disordered region; sequence KGLATDENAPPGRRRTNSES. C2H2-type zinc fingers lie at residues 641 to 663, 669 to 691, 697 to 720, 758 to 780, and 786 to 808; these read YRCR…LRVH, YQCP…MIHH, YQCK…REQH, YRCD…RRIH, and YRCS…MWKH. The tract at residues 831–888 is disordered; the sequence is GRVLGKSPGKTQLKSSEESADPVTGSSENAVSSSELMSQTPSEVLGTNENEKLSPTSN. Over residues 854–888 the composition is skewed to polar residues; the sequence is TGSSENAVSSSELMSQTPSEVLGTNENEKLSPTSN. A C2H2-type 9 zinc finger spans residues 911-933; that stretch reads FCCCICGFESTSKENLLDHMKEH.

The protein belongs to the krueppel C2H2-type zinc-finger protein family.

It is found in the nucleus. Functionally, may be involved in transcriptional regulation. This chain is Zinc finger protein 507 (ZNF507), found in Homo sapiens (Human).